A 190-amino-acid chain; its full sequence is GTP cyclohydrolase 1 (190 aa).

Zn(2+)-binding residues include C75, H78, and C146.

This sequence belongs to the GTP cyclohydrolase I family. In terms of assembly, toroid-shaped homodecamer, composed of two pentamers of five dimers.

The enzyme catalyses GTP + H2O = 7,8-dihydroneopterin 3'-triphosphate + formate + H(+). Its pathway is cofactor biosynthesis; 7,8-dihydroneopterin triphosphate biosynthesis; 7,8-dihydroneopterin triphosphate from GTP: step 1/1. The polypeptide is GTP cyclohydrolase 1 (Campylobacter jejuni (strain RM1221)).